A 217-amino-acid chain; its full sequence is Glutathione S-transferase 1 (217 aa).

The GST N-terminal domain occupies 1–83 (MVMTLYKLDA…YLVSKYGADD (83 aa)). Residues Ser11, 53–55 (HTV), and 67–69 (DSH) contribute to the glutathione site. A GST C-terminal domain is found at 89–211 (DPKKRAIVDQ…APGNDLCKDL (123 aa)).

Belongs to the GST superfamily. Theta family. As to quaternary structure, homodimer.

It catalyses the reaction RX + glutathione = an S-substituted glutathione + a halide anion + H(+). Functionally, conjugation of reduced glutathione to a wide number of exogenous and endogenous hydrophobic electrophiles. The polypeptide is Glutathione S-transferase 1 (GST1) (Manduca sexta (Tobacco hawkmoth)).